A 99-amino-acid chain; its full sequence is Protein S100-Z (99 aa).

EF-hand domains lie at 13-48 (IRIF…FLSC) and 50-85 (KETQ…LTVA). Residues Ser20, Glu23, Lys28, Glu33, Asp63, Asn65, Asp67, Glu69, and Glu74 each contribute to the Ca(2+) site.

Belongs to the S-100 family. Homodimer. Interacts with S100P. As to expression, highest level of expression in spleen and leukocytes.

This is Protein S100-Z from Homo sapiens (Human).